Reading from the N-terminus, the 1337-residue chain is Protein cordon-bleu (1337 aa).

The tract at residues Met1–His41 is disordered. Residues Ser47, Ser50, Ser212, Ser235, Ser272, and Ser294 each carry the phosphoserine modification. Disordered stretches follow at residues Ser260 to Glu556 and Ile647 to Gln768. The segment covering Cys288–Ser317 has biased composition (polar residues). The KKRRAP 1 motif lies at Lys323–Pro328. Residues Ser346 and Ser349 each carry the phosphoserine modification. The KKRRAP 2 motif lies at Lys356 to Pro361. The span at Pro361–Val374 shows a compositional bias: pro residues. A Phosphoserine modification is found at Ser372. Positions Asn377–Lys387 are enriched in basic and acidic residues. A compositionally biased stretch (pro residues) spans Leu411–Asp423. The span at Glu469–Glu480 shows a compositional bias: acidic residues. Residues Val484 to Ser500 are compositionally biased toward polar residues. Residue Thr522 is modified to Phosphothreonine. A compositionally biased stretch (low complexity) spans Gly526–Ser541. Composition is skewed to polar residues over residues Ile647–Val666 and Gln687–Val710. A Phosphoserine modification is found at Ser649. A compositionally biased stretch (basic and acidic residues) spans Leu714 to Gln736. Ser816 is subject to Phosphoserine. Disordered stretches follow at residues Thr892–Val923 and Lys967–Ala991. At Ser1038 the chain carries Phosphoserine. A compositionally biased stretch (polar residues) spans Gly1070–Gln1090. Disordered regions lie at residues Gly1070–Lys1094, Met1113–Thr1133, Lys1145–Lys1168, and Ala1192–Glu1221. The residue at position 1128 (Ser1128) is a Phosphoserine. 2 WH2 domains span residues Leu1185 to Thr1205 and Glu1225 to Val1245. The segment covering Gly1197 to Pro1214 has biased composition (basic and acidic residues). The tract at residues Gly1262 to Ser1310 is disordered. Positions Leu1276 to Gln1291 are enriched in pro residues. Residues Val1297–Ser1310 show a composition bias toward polar residues. Ser1303 carries the post-translational modification Phosphoserine. The region spanning Ala1313–Val1333 is the WH2 3 domain.

As to quaternary structure, identified in a complex composed of COBL, PACSIN1 and WASL. Interacts with PACSIN1, PACSIN2 and PACSIN3. Identified in a complex composed of ACTA1, COBL, GSN and TMSB4X. Interacts (via WH2 domains) with actin monomers. Interacts with DBNL. Detected in brain cortex and in the Purkinje cell layer in the cerebellum. Detected in hippocampus neurons, and at lower levels in testis, lung and spleen (at protein level). Detected in embryonic neural tube.

It is found in the cell membrane. It localises to the cytoplasm. Its subcellular location is the cytoskeleton. The protein resides in the cell projection. The protein localises to the ruffle. In terms of biological role, plays an important role in the reorganization of the actin cytoskeleton. Binds to and sequesters actin monomers (G actin). Nucleates actin polymerization by assembling three actin monomers in cross-filament orientation and thereby promotes growth of actin filaments at the barbed end. Can also mediate actin depolymerization at barbed ends and severing of actin filaments. Promotes formation of cell ruffles. Regulates neuron morphogenesis and increases branching of axons and dendrites. Regulates dendrite branching in Purkinje cells. This Mus musculus (Mouse) protein is Protein cordon-bleu (Cobl).